The chain runs to 187 residues: UPF0301 protein Ppha_2142 (187 aa).

This sequence belongs to the UPF0301 (AlgH) family.

This chain is UPF0301 protein Ppha_2142, found in Pelodictyon phaeoclathratiforme (strain DSM 5477 / BU-1).